Here is a 242-residue protein sequence, read N- to C-terminus: Ribonuclease PH (242 aa).

Residues arginine 89 and 127 to 129 (GTR) each bind phosphate.

It belongs to the RNase PH family. As to quaternary structure, homohexameric ring arranged as a trimer of dimers.

It catalyses the reaction tRNA(n+1) + phosphate = tRNA(n) + a ribonucleoside 5'-diphosphate. Phosphorolytic 3'-5' exoribonuclease that plays an important role in tRNA 3'-end maturation. Removes nucleotide residues following the 3'-CCA terminus of tRNAs; can also add nucleotides to the ends of RNA molecules by using nucleoside diphosphates as substrates, but this may not be physiologically important. Probably plays a role in initiation of 16S rRNA degradation (leading to ribosome degradation) during starvation. The protein is Ribonuclease PH of Neisseria meningitidis serogroup B (strain ATCC BAA-335 / MC58).